Reading from the N-terminus, the 83-residue chain is Cytochrome b559 subunit alpha (83 aa).

A helical transmembrane segment spans residues 21 to 35; that stretch reads IIHSITIPSLFIAGW. H23 is a binding site for heme.

It belongs to the PsbE/PsbF family. Heterodimer of an alpha subunit and a beta subunit. PSII is composed of 1 copy each of membrane proteins PsbA, PsbB, PsbC, PsbD, PsbE, PsbF, PsbH, PsbI, PsbJ, PsbK, PsbL, PsbM, PsbT, PsbX, PsbY, PsbZ, Psb30/Ycf12, at least 3 peripheral proteins of the oxygen-evolving complex and a large number of cofactors. It forms dimeric complexes. It depends on heme b as a cofactor.

It localises to the plastid. Its subcellular location is the chloroplast thylakoid membrane. In terms of biological role, this b-type cytochrome is tightly associated with the reaction center of photosystem II (PSII). PSII is a light-driven water:plastoquinone oxidoreductase that uses light energy to abstract electrons from H(2)O, generating O(2) and a proton gradient subsequently used for ATP formation. It consists of a core antenna complex that captures photons, and an electron transfer chain that converts photonic excitation into a charge separation. The chain is Cytochrome b559 subunit alpha from Lotus japonicus (Lotus corniculatus var. japonicus).